Reading from the N-terminus, the 33-residue chain is GFKGAFKNVMFGIAKSAGKSALNALACKIDKSC.

Cysteine 27 and cysteine 33 are disulfide-bonded.

Expressed by the skin glands.

It localises to the secreted. Functionally, has antibacterial activity against the Gram-positive bacterium S.aureus ATCC 25923 (MIC=9 uM) and the Gram-negative bacterium E.coli ATCC 25726 (MIC=9 uM). In Pulchrana picturata (Malaysian fire frog), this protein is Brevinin-2PTb.